Reading from the N-terminus, the 348-residue chain is D-alanine--D-alanine ligase (348 aa).

Residues 132-334 (KRVLESIGIP…YPDLIEELVT (203 aa)) form the ATP-grasp domain. 162–217 (LARLTFPIFVKPANMGSSVGISKAQTKVELRKAIQLALTYDSRVLIEQGVVAREIE) serves as a coordination point for ATP. D288, E301, and N303 together coordinate Mg(2+).

It belongs to the D-alanine--D-alanine ligase family. Mg(2+) serves as cofactor. The cofactor is Mn(2+).

Its subcellular location is the cytoplasm. The enzyme catalyses 2 D-alanine + ATP = D-alanyl-D-alanine + ADP + phosphate + H(+). It functions in the pathway cell wall biogenesis; peptidoglycan biosynthesis. Its function is as follows. Cell wall formation. This chain is D-alanine--D-alanine ligase, found in Streptococcus pyogenes serotype M6 (strain ATCC BAA-946 / MGAS10394).